The primary structure comprises 341 residues: MATIYYDKDANLDLLKKRKVAIIGYGSQGHAHALNLRDSGVDVRVGLAAGSKSKAKAEGAGLRVLSVAEASKEADVIMVLIPDQTQKKVYDEEIAPHLSKGKALLFAHGFNIHFVQVRPPPDVDVLLVAPKGPGHMVRRQYQDGRGIPGLVAVHQDATGQAKAVGLAYARGIGCTRAGVLETTFKEETETDLFGEQAVLCGGAAALVKNGFEVLVEAGYQPESAYFECLHELKLIVDLMYEGGLAWMRHSISDTAEYGDYTRGPRVVDGRSKDEMRKILKEIQGGHFAKEFILENQAGGPTMARYRAAEAAHPIEEVGKRLRDMMSWIREAKKDSSDPGSR.

The KARI N-terminal Rossmann domain occupies Met-1–Thr-182. NADP(+) contacts are provided by residues Tyr-25–Gln-28, Ser-51, Ser-53, and Asp-83–Gln-86. The active site involves His-108. Gly-134 contacts NADP(+). Residues Thr-183 to Ile-328 enclose the KARI C-terminal knotted domain. Asp-191, Glu-195, Glu-227, and Glu-231 together coordinate Mg(2+). Ser-252 provides a ligand contact to substrate.

This sequence belongs to the ketol-acid reductoisomerase family. The cofactor is Mg(2+).

It catalyses the reaction (2R)-2,3-dihydroxy-3-methylbutanoate + NADP(+) = (2S)-2-acetolactate + NADPH + H(+). It carries out the reaction (2R,3R)-2,3-dihydroxy-3-methylpentanoate + NADP(+) = (S)-2-ethyl-2-hydroxy-3-oxobutanoate + NADPH + H(+). Its pathway is amino-acid biosynthesis; L-isoleucine biosynthesis; L-isoleucine from 2-oxobutanoate: step 2/4. The protein operates within amino-acid biosynthesis; L-valine biosynthesis; L-valine from pyruvate: step 2/4. Functionally, involved in the biosynthesis of branched-chain amino acids (BCAA). Catalyzes an alkyl-migration followed by a ketol-acid reduction of (S)-2-acetolactate (S2AL) to yield (R)-2,3-dihydroxy-isovalerate. In the isomerase reaction, S2AL is rearranged via a Mg-dependent methyl migration to produce 3-hydroxy-3-methyl-2-ketobutyrate (HMKB). In the reductase reaction, this 2-ketoacid undergoes a metal-dependent reduction by NADPH to yield (R)-2,3-dihydroxy-isovalerate. This chain is Ketol-acid reductoisomerase (NADP(+)), found in Anaeromyxobacter dehalogenans (strain 2CP-C).